Here is a 632-residue protein sequence, read N- to C-terminus: Putative acetyl-CoA decarbonylase/synthase complex subunit alpha-like (632 aa).

Positions 200, 226, 263, 379, 408, and 438 each coordinate [Ni-4Fe-4S] cluster.

It belongs to the Ni-containing carbon monoxide dehydrogenase family.

Its function is as follows. Part of the ACDS complex that catalyzes the reversible cleavage of acetyl-CoA, allowing autotrophic growth from CO(2). The alpha-epsilon subcomponent functions as a carbon monoxide dehydrogenase. This is Putative acetyl-CoA decarbonylase/synthase complex subunit alpha-like (cdhA2) from Methanopyrus kandleri (strain AV19 / DSM 6324 / JCM 9639 / NBRC 100938).